The primary structure comprises 365 residues: Eukaryotic translation initiation factor 3 subunit H (365 aa).

In terms of domain architecture, MPN spans 11–160; sequence VKVEALVVMK…LRAFRLSPKF (150 aa).

The protein belongs to the eIF-3 subunit H family. As to quaternary structure, component of the eukaryotic translation initiation factor 3 (eIF-3) complex.

It localises to the cytoplasm. Its function is as follows. Component of the eukaryotic translation initiation factor 3 (eIF-3) complex, which is involved in protein synthesis of a specialized repertoire of mRNAs and, together with other initiation factors, stimulates binding of mRNA and methionyl-tRNAi to the 40S ribosome. The eIF-3 complex specifically targets and initiates translation of a subset of mRNAs involved in cell proliferation. This chain is Eukaryotic translation initiation factor 3 subunit H, found in Aspergillus fumigatus (strain CBS 144.89 / FGSC A1163 / CEA10) (Neosartorya fumigata).